We begin with the raw amino-acid sequence, 90 residues long: Probable Fe(2+)-trafficking protein (90 aa).

This sequence belongs to the Fe(2+)-trafficking protein family. As to quaternary structure, monomer.

In terms of biological role, could be a mediator in iron transactions between iron acquisition and iron-requiring processes, such as synthesis and/or repair of Fe-S clusters in biosynthetic enzymes. This is Probable Fe(2+)-trafficking protein from Hamiltonella defensa subsp. Acyrthosiphon pisum (strain 5AT).